The sequence spans 211 residues: Uracil phosphoribosyltransferase (211 aa).

5-phospho-alpha-D-ribose 1-diphosphate is bound by residues R78, R103, and 130–138 (DPMLATGGT). Uracil-binding positions include I195 and 200 to 202 (GDA). D201 is a binding site for 5-phospho-alpha-D-ribose 1-diphosphate.

Belongs to the UPRTase family. Requires Mg(2+) as cofactor.

It carries out the reaction UMP + diphosphate = 5-phospho-alpha-D-ribose 1-diphosphate + uracil. It functions in the pathway pyrimidine metabolism; UMP biosynthesis via salvage pathway; UMP from uracil: step 1/1. With respect to regulation, allosterically activated by GTP. Catalyzes the conversion of uracil and 5-phospho-alpha-D-ribose 1-diphosphate (PRPP) to UMP and diphosphate. The protein is Uracil phosphoribosyltransferase of Kocuria rhizophila (strain ATCC 9341 / DSM 348 / NBRC 103217 / DC2201).